The chain runs to 411 residues: Putative competence-damage inducible protein (411 aa).

It belongs to the CinA family.

This is Putative competence-damage inducible protein from Desulforamulus reducens (strain ATCC BAA-1160 / DSM 100696 / MI-1) (Desulfotomaculum reducens).